The sequence spans 183 residues: ATP synthase subunit b, chloroplastic (183 aa).

Residues 27 to 49 (LATNLINLTVVVGVLIFFGKGVL) form a helical membrane-spanning segment.

The protein belongs to the ATPase B chain family. F-type ATPases have 2 components, F(1) - the catalytic core - and F(0) - the membrane proton channel. F(1) has five subunits: alpha(3), beta(3), gamma(1), delta(1), epsilon(1). F(0) has four main subunits: a(1), b(1), b'(1) and c(10-14). The alpha and beta chains form an alternating ring which encloses part of the gamma chain. F(1) is attached to F(0) by a central stalk formed by the gamma and epsilon chains, while a peripheral stalk is formed by the delta, b and b' chains.

It is found in the plastid. It localises to the chloroplast thylakoid membrane. In terms of biological role, f(1)F(0) ATP synthase produces ATP from ADP in the presence of a proton or sodium gradient. F-type ATPases consist of two structural domains, F(1) containing the extramembraneous catalytic core and F(0) containing the membrane proton channel, linked together by a central stalk and a peripheral stalk. During catalysis, ATP synthesis in the catalytic domain of F(1) is coupled via a rotary mechanism of the central stalk subunits to proton translocation. Functionally, component of the F(0) channel, it forms part of the peripheral stalk, linking F(1) to F(0). The protein is ATP synthase subunit b, chloroplastic of Brachypodium distachyon (Purple false brome).